Consider the following 126-residue polypeptide: Small ribosomal subunit protein uS13c (126 aa).

Residues 97-126 (PLRGQRTRTNARTRRGGKKTVAGKKKAPRK) are disordered. The segment covering 101–126 (QRTRTNARTRRGGKKTVAGKKKAPRK) has biased composition (basic residues).

Belongs to the universal ribosomal protein uS13 family. Part of the 30S ribosomal subunit.

The protein localises to the plastid. The protein resides in the chloroplast. Located at the top of the head of the 30S subunit, it contacts several helices of the 16S rRNA. In Porphyra purpurea (Red seaweed), this protein is Small ribosomal subunit protein uS13c.